The primary structure comprises 650 residues: Exonuclease 3'-5' domain-containing protein 2 (650 aa).

Over 1-6 (MSRQNL) the chain is Mitochondrial intermembrane. Residues 7–29 (VALTVTTLLGVAMGGFVLWKGIQ) traverse the membrane as a helical segment. Residues 30 to 650 (RRWSKTSRVM…YGDDLPIKLS (621 aa)) are Cytoplasmic-facing. Positions 34 to 89 (KTSRVMQQQPQQPQQPQQPQPQPQPQPQPQPEHPQPQQQVPGGREWPPPEDDQLPF) are disordered. Positions 49-67 (PQQPQPQPQPQPQPQPEHP) are enriched in pro residues. A divalent metal cation contacts are provided by Asp137, Glu139, and Asp275. One can recognise a 3'-5' exonuclease domain in the interval 184–276 (ILADGAILKV…DQVTYAARDA (93 aa)). The disordered stretch occupies residues 340-373 (SQLKPRNRKAKTDRMVPGNNQGRDPRKHKRKPLG).

The protein belongs to the EXD2 family. As to quaternary structure, homodimer. Interacts with RBBP8, MRE11 and BRCA1. Requires Mg(2+) as cofactor. Mn(2+) serves as cofactor.

It is found in the mitochondrion outer membrane. The protein localises to the mitochondrion matrix. Its subcellular location is the nucleus. It localises to the chromosome. It catalyses the reaction Exonucleolytic cleavage in the 3'- to 5'-direction to yield nucleoside 5'-phosphates.. Functionally, exonuclease that has both 3'-5' exoribonuclease and exodeoxyribonuclease activities, depending on the divalent metal cation used as cofactor. In presence of Mg(2+), only shows 3'-5' exoribonuclease activity, while it shows both exoribonuclease and exodeoxyribonuclease activities in presence of Mn(2+). Acts as an exoribonuclease in mitochondrion, possibly by regulating ATP production and mitochondrial translation. Also involved in the response to DNA damage. Acts as 3'-5' exodeoxyribonuclease for double-strand breaks resection and efficient homologous recombination. Plays a key role in controlling the initial steps of chromosomal break repair, it is recruited to chromatin in a damage-dependent manner and functionally interacts with the MRN complex to accelerate resection through its 3'-5' exonuclease activity, which efficiently processes double-stranded DNA substrates containing nicks. Also involved in response to replicative stress: recruited to stalled forks and is required to stabilize and restart stalled replication forks by restraining excessive fork regression, thereby suppressing their degradation. In Mus musculus (Mouse), this protein is Exonuclease 3'-5' domain-containing protein 2.